An 87-amino-acid polypeptide reads, in one-letter code: Small ribosomal subunit protein bS21 (87 aa).

Positions 35–52 are enriched in basic and acidic residues; sequence HYEKPSEKKAREKAEAVR. The tract at residues 35-87 is disordered; that stretch reads HYEKPSEKKAREKAEAVRRARKLARKKLQREGLLPSKPKPAFGADRRPSAAAR. Residues 53 to 62 show a composition bias toward basic residues; that stretch reads RARKLARKKL. Residues 78 to 87 show a composition bias toward basic and acidic residues; sequence ADRRPSAAAR.

This is Small ribosomal subunit protein bS21 from Rhodopseudomonas palustris (strain ATCC BAA-98 / CGA009).